Here is a 304-residue protein sequence, read N- to C-terminus: MVAPSQFKQLEKVGNGTYATVYKGLNKTTGVYVALKEVKLDSEEGTPSTAIREISLMKELKHDNIVRLFDVIHTENKLTLVFEFMDNDLKKFMDNRNKGNSHKGLEMDLVKYFQWQLLQGVAFCHENRILHRDLKPQNLLINNRGQLKLGDFGLARAFGIPVNTFSSEVVTLWYRAPDVLMGSRNYCTSIDIWSCGCILAEMIMGKPLFPGSNDEEQLKLIFDTMGTPVEQTWPQVTQLAKYNPLLPPHMPRDLKQLLQNNTEEVLDDNVVDLLHGLLQLNPDARLSAKDALNHPWFAEYNHAN.

The Protein kinase domain occupies 7-297 (FKQLEKVGNG…AKDALNHPWF (291 aa)). ATP contacts are provided by residues 13 to 21 (VGNGTYATV) and lysine 36. Aspartate 133 acts as the Proton acceptor in catalysis.

Belongs to the protein kinase superfamily. CMGC Ser/Thr protein kinase family. CDC2/CDKX subfamily. In terms of assembly, interacts with a number of cyclins.

It catalyses the reaction L-seryl-[protein] + ATP = O-phospho-L-seryl-[protein] + ADP + H(+). The catalysed reaction is L-threonyl-[protein] + ATP = O-phospho-L-threonyl-[protein] + ADP + H(+). In terms of biological role, when phosphate concentrations are high it phosphorylates the PHO4 transcription factor thus establishing repression. The protein is Negative regulator of the PHO system (PHO85) of Kluyveromyces lactis (strain ATCC 8585 / CBS 2359 / DSM 70799 / NBRC 1267 / NRRL Y-1140 / WM37) (Yeast).